The following is a 338-amino-acid chain: S-adenosylmethionine:tRNA ribosyltransferase-isomerase (338 aa).

This sequence belongs to the QueA family. In terms of assembly, monomer.

The protein localises to the cytoplasm. It carries out the reaction 7-aminomethyl-7-carbaguanosine(34) in tRNA + S-adenosyl-L-methionine = epoxyqueuosine(34) in tRNA + adenine + L-methionine + 2 H(+). It functions in the pathway tRNA modification; tRNA-queuosine biosynthesis. Its function is as follows. Transfers and isomerizes the ribose moiety from AdoMet to the 7-aminomethyl group of 7-deazaguanine (preQ1-tRNA) to give epoxyqueuosine (oQ-tRNA). The protein is S-adenosylmethionine:tRNA ribosyltransferase-isomerase of Francisella tularensis subsp. novicida (strain U112).